A 168-amino-acid polypeptide reads, in one-letter code: MAAADVEYRCFVGGLAWATNNETLEQAFANFGQVIDSKVITDRETGRSRGFGFVTFSSEQSMLDAIENMNGKELDGRNITVNQAQSRGGGGGGGGYGGGGGGYGGREGGGYGGGGGGYGGRREGGGGYGGGGYGGGGGGYGGREGGGGYGGGGGYGGNRGDSGGNWRN.

The RRM domain maps to 8 to 86 (YRCFVGGLAW…RNITVNQAQS (79 aa)). Residues 148-168 (GYGGGGGYGGNRGDSGGNWRN) are disordered.

Functionally, possibly has a role in RNA transcription or processing during stress. The chain is Glycine-rich RNA-binding protein 2 (GRP2) from Sorghum bicolor (Sorghum).